Here is a 308-residue protein sequence, read N- to C-terminus: Very-long-chain enoyl-CoA reductase (308 aa).

Over 1–86 (MKHYEVEILD…YFRDLGAQIS (86 aa)) the chain is Cytoplasmic. Position 22 is an N6-acetyllysine (Lys-22). A Phosphoserine modification is found at Ser-58. Lys-60 bears the N6-acetyllysine mark. A helical membrane pass occupies residues 87 to 106 (WVTVFLTEYAGPLFIYLLFY). The Lumenal segment spans residues 107–124 (FRVPFIYGHKYDFTSSRH). The chain crosses the membrane as a helical span at residues 125–147 (TVVHLACICHSFHYIKRLLETLF). At 148–158 (VHRFSHGTMPL) the chain is on the cytoplasmic side. Residues 159–180 (RNIFKNCTYYWGFAAWMAYYIN) form a helical membrane-spanning segment. Residues 181–189 (HPLYTPPTY) are Lumenal-facing. Residues 190–216 (GAQQVKLALAIFVICQLGNFSIHMALR) traverse the membrane as a helical segment. The Cytoplasmic portion of the chain corresponds to 217–245 (DLRPAGSKTRKIPYPTKNPFTWLFLLVSC). A helical membrane pass occupies residues 246 to 262 (PNYTYEVGSWIGFAIMT). Topologically, residues 263-264 (QC) are lumenal. A helical membrane pass occupies residues 265–292 (LPVALFSLVGFTQMTIWAKGKHRSYLKE). Residues 293–308 (FRDYPPLRMPIIPFLL) lie on the Cytoplasmic side of the membrane.

This sequence belongs to the steroid 5-alpha reductase family. As to quaternary structure, interacts with ELOVL1 and LASS2. Interacts with HACD1 and HACD2 (via the third lumenal loop), but not with HACD3 and HACD4. Interacts with ELOVL1, ELOVL2, ELOVL3, ELOVL5 and ELOVL7 in the presence of acyl-CoA; interaction with HACD1/2 and that with ELOVLs are mutually exclusive. Post-translationally, glycosylated. As to expression, expressed in most tissues tested. Highly expressed in skeletal muscle.

The protein localises to the endoplasmic reticulum membrane. The catalysed reaction is a very-long-chain 2,3-saturated fatty acyl-CoA + NADP(+) = a very-long-chain (2E)-enoyl-CoA + NADPH + H(+). It carries out the reaction octadecanoyl-CoA + NADP(+) = (2E)-octadecenoyl-CoA + NADPH + H(+). It catalyses the reaction (2E,7Z,10Z,13Z,16Z)-docosapentaenoyl-CoA + NADPH + H(+) = (7Z,10Z,13Z,16Z)-docosatetraenoyl-CoA + NADP(+). The enzyme catalyses (2E,7Z,10Z,13Z,16Z,19Z)-docosahexaenoyl-CoA + NADPH + H(+) = (7Z,10Z,13Z,16Z,19Z)-docosapentaenoyl-CoA + NADP(+). The catalysed reaction is (2E,8Z,11Z,14Z)-eicosatetraenoyl-CoA + NADPH + H(+) = (8Z,11Z,14Z)-eicosatrienoyl-CoA + NADP(+). It carries out the reaction (2E)-hexadecenoyl-CoA + NADPH + H(+) = hexadecanoyl-CoA + NADP(+). The protein operates within lipid metabolism; fatty acid biosynthesis. Its pathway is lipid metabolism; sphingolipid metabolism. Its function is as follows. Involved in both the production of very long-chain fatty acids for sphingolipid synthesis and the degradation of the sphingosine moiety in sphingolipids through the sphingosine 1-phosphate metabolic pathway. Catalyzes the last of the four reactions of the long-chain fatty acids elongation cycle. This endoplasmic reticulum-bound enzymatic process, allows the addition of 2 carbons to the chain of long- and very long-chain fatty acids/VLCFAs per cycle. This enzyme reduces the trans-2,3-enoyl-CoA fatty acid intermediate to an acyl-CoA that can be further elongated by entering a new cycle of elongation. Thereby, it participates in the production of VLCFAs of different chain lengths that are involved in multiple biological processes as precursors of membrane lipids and lipid mediators. Catalyzes the saturation step of the sphingosine 1-phosphate metabolic pathway, the conversion of trans-2-hexadecenoyl-CoA to palmitoyl-CoA. The protein is Very-long-chain enoyl-CoA reductase (TECR) of Homo sapiens (Human).